The following is a 339-amino-acid chain: Anthranilate phosphoribosyltransferase (339 aa).

Residues G78, G81–D82, T86, N88–T91, K106–S114, and S118 each bind 5-phospho-alpha-D-ribose 1-diphosphate. Position 78 (G78) interacts with anthranilate. S90 lines the Mg(2+) pocket. N109 provides a ligand contact to anthranilate. R164 contacts anthranilate. Mg(2+) is bound by residues D225 and E226. Basic and acidic residues predominate over residues T248–A265. Residues T248–T271 are disordered.

The protein belongs to the anthranilate phosphoribosyltransferase family. In terms of assembly, homodimer. Mg(2+) is required as a cofactor.

The catalysed reaction is N-(5-phospho-beta-D-ribosyl)anthranilate + diphosphate = 5-phospho-alpha-D-ribose 1-diphosphate + anthranilate. It participates in amino-acid biosynthesis; L-tryptophan biosynthesis; L-tryptophan from chorismate: step 2/5. In terms of biological role, catalyzes the transfer of the phosphoribosyl group of 5-phosphorylribose-1-pyrophosphate (PRPP) to anthranilate to yield N-(5'-phosphoribosyl)-anthranilate (PRA). This Methanopyrus kandleri (strain AV19 / DSM 6324 / JCM 9639 / NBRC 100938) protein is Anthranilate phosphoribosyltransferase.